The following is a 383-amino-acid chain: Putative glutamate--cysteine ligase 2-1 (383 aa).

Belongs to the glutamate--cysteine ligase type 2 family. YbdK subfamily.

It catalyses the reaction L-cysteine + L-glutamate + ATP = gamma-L-glutamyl-L-cysteine + ADP + phosphate + H(+). In terms of biological role, ATP-dependent carboxylate-amine ligase which exhibits weak glutamate--cysteine ligase activity. The sequence is that of Putative glutamate--cysteine ligase 2-1 from Arthrobacter sp. (strain FB24).